Reading from the N-terminus, the 1049-residue chain is Bifunctional cytochrome P450/NADPH--P450 reductase (1049 aa).

The cytochrome P450 stretch occupies residues 2 to 472; sequence TIKEMPQPKT…STEQSAKKVR (471 aa). Position 52 (Tyr-52) interacts with (9Z)-hexadecenoate. Cys-401 is a heme binding site. The segment at 473–1049 is NADPH--P450 reductase; sequence KKAENAHNTP…GRYAKDVWAG (577 aa). In terms of domain architecture, Flavodoxin-like spans 483 to 622; it reads LLVLYGSNMG…TYEEWREHMW (140 aa). FMN contacts are provided by residues 489-494, 536-539, 570-572, and 578-580; these read SNMGTA, SYNG, CGD, and TYQ. The 233-residue stretch at 660–892 folds into the FAD-binding FR-type domain; the sequence is HGAFSTNVVA…STPQSEFTLP (233 aa).

This sequence in the N-terminal section; belongs to the cytochrome P450 family. FAD serves as cofactor. Requires FMN as cofactor. Heme is required as a cofactor.

The protein localises to the cytoplasm. The enzyme catalyses 2 oxidized [cytochrome P450] + NADPH = 2 reduced [cytochrome P450] + NADP(+) + H(+). It carries out the reaction an organic molecule + reduced [NADPH--hemoprotein reductase] + O2 = an alcohol + oxidized [NADPH--hemoprotein reductase] + H2O + H(+). Its activity is regulated as follows. Inhibited by N-(12-imidazolyl-dodecanoyl)-L-leucine. In terms of biological role, functions as a fatty acid monooxygenase. Catalyzes hydroxylation of fatty acids at omega-1, omega-2 and omega-3 positions. Shows activity toward medium and long-chain fatty acids, with optimum chain lengths of 12, 14 and 16 carbons (lauric, myristic, and palmitic acids). Able to metabolize some of these primary metabolites to secondary and tertiary products. Marginal activity towards short chain lengths of 8-10 carbons. Hydroxylates highly branched fatty acids, which play an essential role in membrane fluidity regulation. Also displays a NADPH-dependent reductase activity in the C-terminal domain, which allows electron transfer from NADPH to the heme iron of the cytochrome P450 N-terminal domain. Involved in inactivation of quorum sensing signals of other competing bacteria by oxidazing efficiently acyl homoserine lactones (AHLs), molecules involved in quorum sensing signaling pathways, and their lactonolysis products acyl homoserines (AHs). This is Bifunctional cytochrome P450/NADPH--P450 reductase from Priestia megaterium (strain ATCC 14581 / DSM 32 / CCUG 1817 / JCM 2506 / NBRC 15308 / NCIMB 9376 / NCTC 10342 / NRRL B-14308 / VKM B-512 / Ford 19) (Bacillus megaterium).